Here is a 325-residue protein sequence, read N- to C-terminus: Tetraacyldisaccharide 4'-kinase (325 aa).

53-60 provides a ligand contact to ATP; that stretch reads SVGGNGKT.

It belongs to the LpxK family.

The enzyme catalyses a lipid A disaccharide + ATP = a lipid IVA + ADP + H(+). Its pathway is glycolipid biosynthesis; lipid IV(A) biosynthesis; lipid IV(A) from (3R)-3-hydroxytetradecanoyl-[acyl-carrier-protein] and UDP-N-acetyl-alpha-D-glucosamine: step 6/6. Its function is as follows. Transfers the gamma-phosphate of ATP to the 4'-position of a tetraacyldisaccharide 1-phosphate intermediate (termed DS-1-P) to form tetraacyldisaccharide 1,4'-bis-phosphate (lipid IVA). The chain is Tetraacyldisaccharide 4'-kinase from Actinobacillus succinogenes (strain ATCC 55618 / DSM 22257 / CCUG 43843 / 130Z).